The sequence spans 192 residues: Large ribosomal subunit protein bL25 (192 aa).

It belongs to the bacterial ribosomal protein bL25 family. CTC subfamily. As to quaternary structure, part of the 50S ribosomal subunit; part of the 5S rRNA/L5/L18/L25 subcomplex. Contacts the 5S rRNA. Binds to the 5S rRNA independently of L5 and L18.

Its function is as follows. This is one of the proteins that binds to the 5S RNA in the ribosome where it forms part of the central protuberance. This chain is Large ribosomal subunit protein bL25, found in Marinomonas sp. (strain MWYL1).